The sequence spans 125 residues: Phosphoribosyl-AMP cyclohydrolase (125 aa).

Position 74 (Asp-74) interacts with Mg(2+). Cys-75 lines the Zn(2+) pocket. Mg(2+) is bound by residues Asp-76 and Asp-78. Residues Cys-92 and Cys-99 each contribute to the Zn(2+) site.

This sequence belongs to the PRA-CH family. In terms of assembly, homodimer. The cofactor is Mg(2+). Zn(2+) is required as a cofactor.

The protein resides in the cytoplasm. The enzyme catalyses 1-(5-phospho-beta-D-ribosyl)-5'-AMP + H2O = 1-(5-phospho-beta-D-ribosyl)-5-[(5-phospho-beta-D-ribosylamino)methylideneamino]imidazole-4-carboxamide. It participates in amino-acid biosynthesis; L-histidine biosynthesis; L-histidine from 5-phospho-alpha-D-ribose 1-diphosphate: step 3/9. Its function is as follows. Catalyzes the hydrolysis of the adenine ring of phosphoribosyl-AMP. This Citrifermentans bemidjiense (strain ATCC BAA-1014 / DSM 16622 / JCM 12645 / Bem) (Geobacter bemidjiensis) protein is Phosphoribosyl-AMP cyclohydrolase.